A 231-amino-acid chain; its full sequence is Coproheme decarboxylase (231 aa).

Residue Lys-44 forms an Isoglutamyl lysine isopeptide (Lys-Gln) (interchain with Q-Cter in protein Pup) linkage. The active site involves Tyr-133. His-156 serves as a coordination point for Fe-coproporphyrin III.

It belongs to the ChdC family. Type 2 subfamily. Fe-coproporphyrin III serves as cofactor.

The catalysed reaction is Fe-coproporphyrin III + 2 H2O2 + 2 H(+) = heme b + 2 CO2 + 4 H2O. It catalyses the reaction Fe-coproporphyrin III + H2O2 + H(+) = harderoheme III + CO2 + 2 H2O. It carries out the reaction harderoheme III + H2O2 + H(+) = heme b + CO2 + 2 H2O. It functions in the pathway porphyrin-containing compound metabolism; protoheme biosynthesis. Functionally, involved in coproporphyrin-dependent heme b biosynthesis. Catalyzes the decarboxylation of Fe-coproporphyrin III (coproheme) to heme b (protoheme IX), the last step of the pathway. The reaction occurs in a stepwise manner with a three-propionate intermediate. This chain is Coproheme decarboxylase, found in Mycolicibacterium smegmatis (strain ATCC 700084 / mc(2)155) (Mycobacterium smegmatis).